Reading from the N-terminus, the 206-residue chain is GTP-binding protein YPT1 (206 aa).

M1 is modified (N-acetylmethionine). GTP-binding positions include 17 to 23 (SGVGKSC), 33 to 40 (YTNDYIST), G66, and 121 to 124 (NKCD). The S-palmitoyl cysteine moiety is linked to residue C23. The Effector region motif lies at 37 to 45 (YISTIGVDF). The interaction with GDI1 stretch occupies residues 63-80 (DTAGQERFRTITSSYYRG). The S-palmitoyl cysteine moiety is linked to residue C123. Residue K144 forms a Glycyl lysine isopeptide (Lys-Gly) (interchain with G-Cter in ubiquitin) linkage. A GTP-binding site is contributed by 152–153 (AL). S172 and S174 each carry phosphoserine. A disordered region spans residues 173 to 206 (MSQQNLNETTQKKEDKGNVNLKGQSLTNTGGGCC). The interval 189–195 (GNVNLKG) is interaction with GDI1. S-geranylgeranyl cysteine attachment occurs at residues C205 and C206.

The protein belongs to the small GTPase superfamily. Rab family. In terms of assembly, forms a complex with the Rab escort protein (REP) MRS6, which is recognized by Rab geranylgeranyltransferase BET2-BET4. Interacts with the Rab GDP dissociation inhibitor GDI1, which can retrieve from and deliver to membranes the GDP-bound and prenylated form of YPT1. Interacts with YIP1, which is required for proper membrane targeting of prenylated YPT1. Interacts with YIF1, YIP3, YIP4 and YIP5. Post-translationally, prenylation is required for interaction with GDI1 and YIP1.

The protein resides in the endoplasmic reticulum membrane. Its subcellular location is the golgi apparatus membrane. The protein localises to the cytoplasm. It localises to the preautophagosomal structure membrane. With respect to regulation, rab activation is generally mediated by a guanine exchange factor (GEF), while inactivation through hydrolysis of bound GTP is catalyzed by a GTPase activating protein (GAP). YPT1 is activated by the GEFs DSS4 and TRAPP complex, and inactivated by GAPs GYP1, GYP5 and GYP8. Functionally, the small GTPases Rab are key regulators of intracellular membrane trafficking, from the formation of transport vesicles to their fusion with membranes. Rabs cycle between an inactive GDP-bound form and an active GTP-bound form that is able to recruit to membranes different set of downstream effectors directly responsible for vesicle formation, movement, tethering and fusion. YPT1 regulates the trafficking of secretory vesicles from the endoplasmic reticulum (ER) to the Golgi. Vesicular transport depends on shuttling of YPT1 between membrane and cytosol by GDI1, probably by recycling it to its membrane of origin after a vesicle fusion event. Plays a role in the initial events of the autophagic vacuole development which take place at specialized regions of the endoplasmic reticulum. Also involved in the recycling of membrane proteins. The polypeptide is GTP-binding protein YPT1 (YPT1) (Saccharomyces cerevisiae (strain ATCC 204508 / S288c) (Baker's yeast)).